The primary structure comprises 151 residues: FUN14 domain-containing protein 2 (151 aa).

Residues 1–42 (MAANSQGNFDGKFEALDLAELTKKQPWWRKLFGQESGPSAEK) are Cytoplasmic-facing. A helical membrane pass occupies residues 43–63 (YSVATQLVIGGVTGWCTGFVF). Topologically, residues 64–69 (QKVGKL) are mitochondrial intermembrane. A helical transmembrane segment spans residues 70–90 (AATAVGGGFFLLQLANHTGYI). Residues 91-126 (KVDWQRVEKDMKKAKEQLKIRKNKQIPTEVKSKAEE) lie on the Cytoplasmic side of the membrane. Residues 127 to 147 (VVSFVKKNVLVTGGFFGGFLL) form a helical membrane-spanning segment. Over 148–151 (GMAS) the chain is Mitochondrial intermembrane.

Belongs to the FUN14 family. In terms of tissue distribution, highly expressed in platelet (at protein level). Expressed in liver, brain, heart and muscle.

It localises to the mitochondrion outer membrane. The protein localises to the nucleus. Binds directly and specifically 1,2-Diacyl-sn-glycero-3-phospho-(1'-myo-inositol-3',4',5'-bisphosphate) (PIP3) leading to the recruitment of PIP3 to mitochondria and may play a role in the regulation of the platelet activation via AKT/GSK3B/cGMP signaling pathways. May act as transcription factor that regulates SREBP1 (isoform SREBP-1C) expression in order to modulate triglyceride (TG) homeostasis in hepatocytes. This Mus musculus (Mouse) protein is FUN14 domain-containing protein 2.